The following is an 876-amino-acid chain: Protein TORMOZ EMBRYO DEFECTIVE (876 aa).

13 WD repeats span residues 58–97 (GESD…CIRS), 100–139 (GHEG…CTHY), 142–183 (GHKG…TEKK), 190–229 (KHFS…CKAT), 255–294 (LDQK…CLYE), 308–347 (ESKR…EETE), 356–396 (GYNE…CSYV), 399–441 (GHKE…CIGV), 444–484 (GHNG…EDSE), 497–536 (AHDK…HVVT), 539–580 (GHKR…KTFE), 581–620 (GHTS…CIAT), and 623–662 (QHED…DKED). Residues 816-876 (VETEYPKDEK…AEAQGSVIAV (61 aa)) are disordered. The span at 819–831 (EYPKDEKKKEKDV) shows a compositional bias: basic and acidic residues. A Nuclear localization signal motif is present at residues 848–855 (SRKRKSQK). Residues 849–864 (RKRKSQKSKGKSNKKR) are compositionally biased toward basic residues.

Preferentially expressed in dividing cells in a variety of tissues and meristematic regions.

It is found in the nucleus. The protein resides in the nucleolus. In terms of biological role, essential protein involved in the regulation of cell division planes during embryogenesis which defines cell patterning, especially longitudinal division planes of the proembryo, probably via the regulation of embryo patterning genes expression patterns. The protein is Protein TORMOZ EMBRYO DEFECTIVE of Arabidopsis thaliana (Mouse-ear cress).